Consider the following 299-residue polypeptide: Ankyrin repeat domain-containing protein 54 (299 aa).

A disordered region spans residues 1–27 (MAATGGGAEDESRSGRSSSEGECAVAP). Alanine 2 is subject to N-acetylalanine. At serine 62 the chain carries Phosphoserine. Residues 98–116 (RRLGPTGKEVHALKRLRDS) carry the Nuclear localization signal (NLS) motif. 4 ANK repeats span residues 108–137 (HALK…DPCA), 141–170 (KGRT…DPNQ), 174–203 (LGNT…RVDA), and 207–239 (AGRT…EVKQ). The interval 140–240 (DKGRTALHFA…EAVRLEVKQI (101 aa)) is LYN-binding. The Nuclear export signal (NES) motif lies at 282 to 292 (LLASFTSLSLQ).

In terms of assembly, interacts (via ankyrin repeat region) with LYN (via SH3-domain) in an activation-independent status of LYN. Forms a multiprotein complex with LYN and HCLS1. Interacts with TSN2, VAV1, DBNL and LASP1.

Its subcellular location is the nucleus. The protein resides in the cytoplasm. The protein localises to the midbody. Functionally, plays an important role in regulating intracellular signaling events associated with erythroid terminal differentiation. The protein is Ankyrin repeat domain-containing protein 54 (Ankrd54) of Rattus norvegicus (Rat).